We begin with the raw amino-acid sequence, 893 residues long: Dolichyl-phosphate-mannose--protein mannosyltransferase 1 (893 aa).

7 helical membrane passes run 29 to 49 (FSFL…CVRA), 77 to 97 (LLMD…AALT), 124 to 144 (LFTC…VYFP), 147 to 167 (SKTA…LITM), 170 to 190 (YIMI…YWSV), 224 to 244 (AMFT…NLLG), and 258 to 278 (FSYI…VFAV). One can recognise an MIR 1 domain in the interval 310–364 (FADVAYGSLVTIRNAIPEHGYLHSSELLYPEGTEQQIISLVDEPNQNALWIIEHE). Asn-370 is a glycosylation site (N-linked (GlcNAc...) asparagine). 2 MIR domains span residues 374-433 (IELL…IQIL) and 443-499 (NGTV…IESN). Asn-443 is a glycosylation site (N-linked (GlcNAc...) asparagine). Thr-451 is subject to Phosphothreonine. 3 consecutive transmembrane segments (helical) span residues 573 to 593 (FVWY…IFCL), 610 to 630 (YNYN…PYIL), and 643 to 663 (ALYF…NAVF). The N-linked (GlcNAc...) asparagine glycan is linked to Asn-665. A helical membrane pass occupies residues 671–691 (ALSVIIMALMFLVYRLYSPFT). A glycan (N-linked (GlcNAc...) asparagine) is linked at Asn-720. A disordered region spans residues 785-893 (KAEQEAREAA…VAESAQARVE (109 aa)). Over residues 786-806 (AEQEAREAAEKAASEAAERSS) the composition is skewed to basic and acidic residues. Low complexity-rich tracts occupy residues 807-823 (SEAA…AASV) and 854-864 (MEAAALNNAAE). A compositionally biased stretch (polar residues) spans 868-878 (VVGSSPESVAS).

It belongs to the glycosyltransferase 39 family.

It is found in the endoplasmic reticulum membrane. The protein resides in the nucleus membrane. It catalyses the reaction a di-trans,poly-cis-dolichyl beta-D-mannosyl phosphate + L-seryl-[protein] = 3-O-(alpha-D-mannosyl)-L-seryl-[protein] + a di-trans,poly-cis-dolichyl phosphate + H(+). The enzyme catalyses a di-trans,poly-cis-dolichyl beta-D-mannosyl phosphate + L-threonyl-[protein] = 3-O-(alpha-D-mannosyl)-L-threonyl-[protein] + a di-trans,poly-cis-dolichyl phosphate + H(+). The protein operates within protein modification; protein glycosylation. Its function is as follows. Transfers mannose from Dol-P-mannose to Ser or Thr residues on proteins. Required for normal cell growth and septum formation. Shown to actively O-mannosylate wsc1. This Schizosaccharomyces pombe (strain 972 / ATCC 24843) (Fission yeast) protein is Dolichyl-phosphate-mannose--protein mannosyltransferase 1 (ogm1).